The chain runs to 70 residues: Bowman-Birk type proteinase inhibitor A-II (70 aa).

7 disulfide bridges follow: C11-C68, C12-C29, C15-C63, C17-C27, C36-C43, C40-C55, and C45-C53.

The protein belongs to the Bowman-Birk serine protease inhibitor family.

Its function is as follows. These proteins inhibit trypsin and chymotrypsin, having 2 sites of interaction with trypsin. The site of interaction with chymotrypsin has not been determined but is not independent of the trypsin-reactive sites. This Arachis hypogaea (Peanut) protein is Bowman-Birk type proteinase inhibitor A-II.